The chain runs to 513 residues: Laccase (513 aa).

Plastocyanin-like domains lie at 45–81 (PTRL…STHF), 101–178 (KTVV…HDPK), 240–318 (WPYL…ILAN), and 378–509 (QDEY…MDIT). Residues His105, His107, His153, and His155 each contribute to the Cu cation site. The Cu cation site is built by His419, His422, His424, His491, Cys492, His493, His497, and Met502.

Belongs to the multicopper oxidase family. As to quaternary structure, monomer. The cofactor is Cu(2+).

The protein localises to the spore coat. The catalysed reaction is 4 hydroquinone + O2 = 4 benzosemiquinone + 2 H2O. The enzyme catalyses 2 (4Z,15Z)-bilirubin IXalpha + O2 = 2 biliverdin IXalpha + 2 H2O. Its activity is regulated as follows. Inhibited by azide. Functionally, multicopper oxidase that catalyzes the oxidation of a variety of substrates, including phenolic and non-phenolic compounds. Substrates include syringaldazine (SGZ), 2,6-dimethoxyphenol (2,6-DMP) and the non-phenolic compound 2,2'-azino-bis(3-ethylbenzothiazoline-6-sulfonic acid) (ABTS). Has no tyrosinase activity. Is implicated in the biosynthesis of a brownish pigment that characterizes sporulating colonies of B.subtilis, and which appears to be a melanin-like product and to confer protection against UV light. In vitro, also shows strong bilirubin oxidase (BOD) activity, and can catalyze the oxidation of free bilirubin (UB), direct bilirubin (conjugated with glucuronic acid, DB) and ditaurobilirubin. The polypeptide is Laccase (Bacillus subtilis (strain 168)).